The following is a 382-amino-acid chain: Dual-specificity RNA methyltransferase RlmN (382 aa).

Residue glutamate 95 is the Proton acceptor of the active site. In terms of domain architecture, Radical SAM core spans 101–347; the sequence is EDDRGTLCIS…TTVRKTRGDD (247 aa). A disulfide bridge connects residues cysteine 108 and cysteine 352. Positions 115, 119, and 122 each coordinate [4Fe-4S] cluster. Residues 178–179, serine 210, 232–234, and asparagine 309 contribute to the S-adenosyl-L-methionine site; these read GE and SLH. Cysteine 352 acts as the S-methylcysteine intermediate in catalysis.

The protein belongs to the radical SAM superfamily. RlmN family. Requires [4Fe-4S] cluster as cofactor.

It localises to the cytoplasm. It carries out the reaction adenosine(2503) in 23S rRNA + 2 reduced [2Fe-2S]-[ferredoxin] + 2 S-adenosyl-L-methionine = 2-methyladenosine(2503) in 23S rRNA + 5'-deoxyadenosine + L-methionine + 2 oxidized [2Fe-2S]-[ferredoxin] + S-adenosyl-L-homocysteine. The enzyme catalyses adenosine(37) in tRNA + 2 reduced [2Fe-2S]-[ferredoxin] + 2 S-adenosyl-L-methionine = 2-methyladenosine(37) in tRNA + 5'-deoxyadenosine + L-methionine + 2 oxidized [2Fe-2S]-[ferredoxin] + S-adenosyl-L-homocysteine. In terms of biological role, specifically methylates position 2 of adenine 2503 in 23S rRNA and position 2 of adenine 37 in tRNAs. m2A2503 modification seems to play a crucial role in the proofreading step occurring at the peptidyl transferase center and thus would serve to optimize ribosomal fidelity. This Bordetella avium (strain 197N) protein is Dual-specificity RNA methyltransferase RlmN.